Consider the following 235-residue polypeptide: Ubiquinone biosynthesis O-methyltransferase (235 aa).

4 residues coordinate S-adenosyl-L-methionine: Arg-39, Gly-59, Asp-80, and Met-124.

The protein belongs to the methyltransferase superfamily. UbiG/COQ3 family.

It catalyses the reaction a 3-demethylubiquinol + S-adenosyl-L-methionine = a ubiquinol + S-adenosyl-L-homocysteine + H(+). The enzyme catalyses a 3-(all-trans-polyprenyl)benzene-1,2-diol + S-adenosyl-L-methionine = a 2-methoxy-6-(all-trans-polyprenyl)phenol + S-adenosyl-L-homocysteine + H(+). The protein operates within cofactor biosynthesis; ubiquinone biosynthesis. O-methyltransferase that catalyzes the 2 O-methylation steps in the ubiquinone biosynthetic pathway. The sequence is that of Ubiquinone biosynthesis O-methyltransferase from Vibrio campbellii (strain ATCC BAA-1116).